The following is a 442-amino-acid chain: MSKTLYQKIYDSHIVYEDKKNISVLYIDLHLIHEVTSPQAFDSLRNKKRKVRQPEKTFATMDHNVSTQKRDINASGSMAKKQMQQLIRNCDEFNISLYDINNPNQGIVHVIAPEKGMTLPGMIIVCGDSHTSTHGAFGALSFGIGTSEVEHVLATQTLKQQCFKNMKVEIVGDIPKFVTAKDIILFIIRRLGSSGGSGYVIEFCGNVIEKMSMEERMTVCNMAIEMGAKSGIIAPDETTYAYLKNKIYSPSGACWEXSISYWKTLKSDKDAFFDKCFTIDISNLAPQVTWGTSPDQVISINEKIPHYNEFNSITQKNSAKSALKYMGLNEGAYLTNISIDKVFIGSCTNARIEDLRSASKILKNRKISSNVKAIVVPGSGSVKQQAEREGLDKIFINSGFEWRLPGCSMCLGMNRDQLNIGERCASXSNRNFEGRQGRGGRT.

[4Fe-4S] cluster is bound by residues C347, C407, and C410.

The protein belongs to the aconitase/IPM isomerase family. LeuC type 1 subfamily. In terms of assembly, heterodimer of LeuC and LeuD. Requires [4Fe-4S] cluster as cofactor.

It carries out the reaction (2R,3S)-3-isopropylmalate = (2S)-2-isopropylmalate. Its pathway is amino-acid biosynthesis; L-leucine biosynthesis; L-leucine from 3-methyl-2-oxobutanoate: step 2/4. Functionally, catalyzes the isomerization between 2-isopropylmalate and 3-isopropylmalate, via the formation of 2-isopropylmaleate. The protein is 3-isopropylmalate dehydratase large subunit of Buchnera aphidicola subsp. Uroleucon helianthicola.